The chain runs to 142 residues: Putative FK506-binding protein 9-like protein (142 aa).

One can recognise a PPIase FKBP-type domain in the interval 1–49; sequence MDMGLREMCVGEKRTVIIPPHLGYGEAGVDGEVPGSAVLVFDIELLELV. EF-hand domains are found at residues 60–95 and 105–140; these read WNGE…QVAS and DAEL…AKQD. Ca(2+) contacts are provided by Asp118, Asn120, Asp122, Lys124, and Glu129.

This Homo sapiens (Human) protein is Putative FK506-binding protein 9-like protein (FKBP9P1).